The chain runs to 79 residues: CDC42 small effector protein 1 (79 aa).

S-palmitoyl cysteine attachment occurs at residues cysteine 10 and cysteine 11. Residues 30–43 enclose the CRIB domain; it reads IGEPMNFVHLTHIG. Positions 48 to 79 are disordered; sequence GAGDGLAMTGAVQEQMRSKGNRDRPWSNSRAL. Positions 63–72 are enriched in basic and acidic residues; that stretch reads MRSKGNRDRP.

The protein belongs to the CDC42SE/SPEC family. As to quaternary structure, interacts with CDC42 (in GTP-bound form). Interacts weakly with RAC1 and not at all with RHOA.

It localises to the cytoplasm. The protein resides in the cytoskeleton. Its subcellular location is the cell membrane. Functionally, probably involved in the organization of the actin cytoskeleton by acting downstream of CDC42, inducing actin filament assembly. Alters CDC42-induced cell shape changes. In activated T-cells, may play a role in CDC42-mediated F-actin accumulation at the immunological synapse. May play a role in early contractile events in phagocytosis in macrophages. The protein is CDC42 small effector protein 1 (Cdc42se1) of Rattus norvegicus (Rat).